We begin with the raw amino-acid sequence, 145 residues long: Neutral phospholipase A2 homolog taipoxin beta chain 1 (145 aa).

An N-terminal signal peptide occupies residues 1–27 (MHPAHLLVLLAVCVSLLGASDIPPLPL). Cystine bridges form between cysteine 38/cysteine 98, cysteine 54/cysteine 144, cysteine 56/cysteine 72, cysteine 71/cysteine 125, cysteine 78/cysteine 118, cysteine 87/cysteine 111, and cysteine 105/cysteine 116.

The protein belongs to the phospholipase A2 family. Group I subfamily. D49 sub-subfamily. In terms of assembly, heterotrimer of alpha, beta, and gamma chains; non-covalently linked. In terms of tissue distribution, expressed by the venom gland.

Its subcellular location is the secreted. In terms of biological role, heterotrimer: Snake venom phospholipase A2 (PLA2) heterotrimer that acts as a potent presynaptic neurotoxin by blocking synaptic transmission and synaptic vesicle recycling. May act by binding in a calcium-dependent fashion to neurotonal pentraxin-1 (NPTX1) and neurotonal pentraxin-2 (NPTX2), but not to neuronal pentraxin receptor (NPTXR). Also binds to taipoxin-associated calcium binding protein 49 (RCN2), a protein localized in the lumen of endoplasmic reticulum. Functionally, monomer (beta chain): Snake venom phospholipase A2 homolog that is neither toxic nor enzymatically active. Does not bind calcium. This is Neutral phospholipase A2 homolog taipoxin beta chain 1 from Oxyuranus scutellatus scutellatus (Australian taipan).